A 201-amino-acid polypeptide reads, in one-letter code: FMN-dependent NADH:quinone oxidoreductase (201 aa).

FMN contacts are provided by residues Ser-10, 16–18 (SQS), 96–99 (MYNF), and 140–143 (SRGG).

This sequence belongs to the azoreductase type 1 family. As to quaternary structure, homodimer. FMN serves as cofactor.

It carries out the reaction 2 a quinone + NADH + H(+) = 2 a 1,4-benzosemiquinone + NAD(+). The enzyme catalyses N,N-dimethyl-1,4-phenylenediamine + anthranilate + 2 NAD(+) = 2-(4-dimethylaminophenyl)diazenylbenzoate + 2 NADH + 2 H(+). In terms of biological role, quinone reductase that provides resistance to thiol-specific stress caused by electrophilic quinones. Also exhibits azoreductase activity. Catalyzes the reductive cleavage of the azo bond in aromatic azo compounds to the corresponding amines. In Shigella flexneri serotype 5b (strain 8401), this protein is FMN-dependent NADH:quinone oxidoreductase.